Here is a 111-residue protein sequence, read N- to C-terminus: Cell cycle protein GpsB (111 aa).

Residues 38–72 adopt a coiled-coil conformation; it reads IKDYEAFHKEFEQLKQQNARLKRELEEQKLAVTQV.

Belongs to the GpsB family. As to quaternary structure, forms polymers through the coiled coil domains. Interacts with PBP1, MreC and EzrA.

It localises to the cytoplasm. In terms of biological role, divisome component that associates with the complex late in its assembly, after the Z-ring is formed, and is dependent on DivIC and PBP2B for its recruitment to the divisome. Together with EzrA, is a key component of the system that regulates PBP1 localization during cell cycle progression. Its main role could be the removal of PBP1 from the cell pole after pole maturation is completed. Also contributes to the recruitment of PBP1 to the division complex. Not essential for septum formation. The sequence is that of Cell cycle protein GpsB from Bacillus cereus (strain G9842).